Consider the following 707-residue polypeptide: Ribosomal RNA large subunit methyltransferase K/L (707 aa).

In terms of domain architecture, THUMP spans 43 to 154 (QIYRCCLWSR…KDKAILGVDM (112 aa)).

The protein belongs to the methyltransferase superfamily. RlmKL family.

Its subcellular location is the cytoplasm. It carries out the reaction guanosine(2445) in 23S rRNA + S-adenosyl-L-methionine = N(2)-methylguanosine(2445) in 23S rRNA + S-adenosyl-L-homocysteine + H(+). The enzyme catalyses guanosine(2069) in 23S rRNA + S-adenosyl-L-methionine = N(2)-methylguanosine(2069) in 23S rRNA + S-adenosyl-L-homocysteine + H(+). Functionally, specifically methylates the guanine in position 2445 (m2G2445) and the guanine in position 2069 (m7G2069) of 23S rRNA. In Vibrio campbellii (strain ATCC BAA-1116), this protein is Ribosomal RNA large subunit methyltransferase K/L.